The following is a 335-amino-acid chain: Beta-ketoacyl-[acyl-carrier-protein] synthase III 3 (335 aa).

Catalysis depends on residues C114 and H256. The ACP-binding stretch occupies residues 257 to 261 (QANHR). The active site involves N286.

It belongs to the thiolase-like superfamily. FabH family. As to quaternary structure, homodimer.

Its subcellular location is the cytoplasm. The catalysed reaction is malonyl-[ACP] + acetyl-CoA + H(+) = 3-oxobutanoyl-[ACP] + CO2 + CoA. It participates in lipid metabolism; fatty acid biosynthesis. Catalyzes the condensation reaction of fatty acid synthesis by the addition to an acyl acceptor of two carbons from malonyl-ACP. Catalyzes the first condensation reaction which initiates fatty acid synthesis and may therefore play a role in governing the total rate of fatty acid production. Possesses both acetoacetyl-ACP synthase and acetyl transacylase activities. Its substrate specificity determines the biosynthesis of branched-chain and/or straight-chain of fatty acids. In Streptomyces coelicolor (strain ATCC BAA-471 / A3(2) / M145), this protein is Beta-ketoacyl-[acyl-carrier-protein] synthase III 3.